We begin with the raw amino-acid sequence, 530 residues long: MELTLWTYEGPPHIGAMRIATSMKGLHYVLHAPQGDTYADLLFTMIERRGSRPPVTYTTFQARDLGGDTAELVKGHIFEAVERFKPEALLVGESCTAELIQDQPGSLAKGMGLNIPIVSLELPAYSKKENWGASETFYQLIRGLLKEISEDSSNNAKQSWQEEGRRPRVNLLGPSLLGFRCRDDVLEIQKILGENGIDINVIAPLGASPSDLMRLPKADANVCLYPEIAESTCLWLERNFKTPFTKVVPIGVKATQDFLEELYELLGMEVSNSISNSDQSKLPWYSKSVDSNYLTGKRVFIFGDGTHVLAAARIANEELGFEVVGIGTYSREMARKVRAAATELGLEALITNDYLEVEESIKECAPELVLGTQMERHSAKRLGIPCAVISTPMHVQDVPARYSPQMGWEGANVIFDDWVHPLMMGLEEHLIGMFRHDFEFTDGHQSHLGHLGGHASETKTSSKGINQSPNNHSPAGESIHWTSEGESELAKIPFFVRGKVRRNTEKYARQAGCREIDGETLLDAKAHFGA.

Asp36 contacts [4Fe-4S] cluster. Asp290 functions as the Proton donor in the catalytic mechanism. Gly425 to Leu426 contacts substrate. The disordered stretch occupies residues Leu448 to Ser483. Residues Thr458–Ser473 are compositionally biased toward polar residues.

The protein belongs to the ChlB/BchB/BchZ family. In terms of assembly, protochlorophyllide reductase is composed of three subunits; ChlL, ChlN and ChlB. Forms a heterotetramer of two ChlB and two ChlN subunits. [4Fe-4S] cluster serves as cofactor.

The catalysed reaction is chlorophyllide a + oxidized 2[4Fe-4S]-[ferredoxin] + 2 ADP + 2 phosphate = protochlorophyllide a + reduced 2[4Fe-4S]-[ferredoxin] + 2 ATP + 2 H2O. The protein operates within porphyrin-containing compound metabolism; chlorophyll biosynthesis (light-independent). Component of the dark-operative protochlorophyllide reductase (DPOR) that uses Mg-ATP and reduced ferredoxin to reduce ring D of protochlorophyllide (Pchlide) to form chlorophyllide a (Chlide). This reaction is light-independent. The NB-protein (ChlN-ChlB) is the catalytic component of the complex. In Prochlorococcus marinus (strain SARG / CCMP1375 / SS120), this protein is Light-independent protochlorophyllide reductase subunit B.